The sequence spans 661 residues: DNA ligase (661 aa).

NAD(+)-binding positions include 31–35 (DSGYD), 80–81 (SL), and E109. K111 serves as the catalytic N6-AMP-lysine intermediate. Positions 132, 167, 283, and 307 each coordinate NAD(+). Positions 401, 404, 419, and 424 each coordinate Zn(2+). Positions 582–661 (AGEQLLQGKT…AGFLNLLGLS (80 aa)) constitute a BRCT domain.

The protein belongs to the NAD-dependent DNA ligase family. LigA subfamily. Mg(2+) serves as cofactor. Requires Mn(2+) as cofactor.

The catalysed reaction is NAD(+) + (deoxyribonucleotide)n-3'-hydroxyl + 5'-phospho-(deoxyribonucleotide)m = (deoxyribonucleotide)n+m + AMP + beta-nicotinamide D-nucleotide.. Its function is as follows. DNA ligase that catalyzes the formation of phosphodiester linkages between 5'-phosphoryl and 3'-hydroxyl groups in double-stranded DNA using NAD as a coenzyme and as the energy source for the reaction. It is essential for DNA replication and repair of damaged DNA. This chain is DNA ligase, found in Syntrophomonas wolfei subsp. wolfei (strain DSM 2245B / Goettingen).